Here is a 364-residue protein sequence, read N- to C-terminus: 3-isopropylmalate dehydrogenase (364 aa).

An NAD(+)-binding site is contributed by 79-92 (GSKWDHLPEIEKPE). Residues R100, R110, R139, and D227 each coordinate substrate. The Mg(2+) site is built by D227, D251, and D255. 285–297 (GSAPNIAGKTIAN) contributes to the NAD(+) binding site.

Belongs to the isocitrate and isopropylmalate dehydrogenases family. LeuB type 1 subfamily. In terms of assembly, homodimer. The cofactor is Mg(2+). Mn(2+) is required as a cofactor.

The protein resides in the cytoplasm. The catalysed reaction is (2R,3S)-3-isopropylmalate + NAD(+) = 4-methyl-2-oxopentanoate + CO2 + NADH. The protein operates within amino-acid biosynthesis; L-leucine biosynthesis; L-leucine from 3-methyl-2-oxobutanoate: step 3/4. Functionally, catalyzes the oxidation of 3-carboxy-2-hydroxy-4-methylpentanoate (3-isopropylmalate) to 3-carboxy-4-methyl-2-oxopentanoate. The product decarboxylates to 4-methyl-2 oxopentanoate. This Buchnera aphidicola subsp. Thelaxes suberi protein is 3-isopropylmalate dehydrogenase.